The sequence spans 280 residues: Ribosomal RNA small subunit methyltransferase A (280 aa).

The S-adenosyl-L-methionine site is built by histidine 15, leucine 17, glycine 42, glutamate 64, aspartate 89, and asparagine 109.

The protein belongs to the class I-like SAM-binding methyltransferase superfamily. rRNA adenine N(6)-methyltransferase family. RsmA subfamily.

It localises to the cytoplasm. It carries out the reaction adenosine(1518)/adenosine(1519) in 16S rRNA + 4 S-adenosyl-L-methionine = N(6)-dimethyladenosine(1518)/N(6)-dimethyladenosine(1519) in 16S rRNA + 4 S-adenosyl-L-homocysteine + 4 H(+). Specifically dimethylates two adjacent adenosines (A1518 and A1519) in the loop of a conserved hairpin near the 3'-end of 16S rRNA in the 30S particle. May play a critical role in biogenesis of 30S subunits. This chain is Ribosomal RNA small subunit methyltransferase A, found in Prochlorococcus marinus (strain MIT 9303).